The sequence spans 123 residues: Histone H2B.1/H2B.2 (123 aa).

Positions methionine 1–lysine 30 are disordered. Residue serine 110 is glycosylated (O-linked (GlcNAc) serine). A Glycyl lysine isopeptide (Lys-Gly) (interchain with G-Cter in ubiquitin) cross-link involves residue lysine 118.

This sequence belongs to the histone H2B family. As to quaternary structure, the nucleosome is a histone octamer containing two molecules each of H2A, H2B, H3 and H4 assembled in one H3-H4 heterotetramer and two H2A-H2B heterodimers. The octamer wraps approximately 147 bp of DNA. Monoubiquitination of Lys-118 gives a specific tag for epigenetic transcriptional activation and is also prerequisite for histone H3 'Lys-4' and 'Lys-79' methylation. Post-translationally, glcNAcylation at Ser-110 promotes monoubiquitination of Lys-118. It fluctuates in response to extracellular glucose, and associates with transcribed genes.

Its subcellular location is the nucleus. The protein localises to the chromosome. Functionally, core component of nucleosome. Nucleosomes wrap and compact DNA into chromatin, limiting DNA accessibility to the cellular machineries which require DNA as a template. Histones thereby play a central role in transcription regulation, DNA repair, DNA replication and chromosomal stability. DNA accessibility is regulated via a complex set of post-translational modifications of histones, also called histone code, and nucleosome remodeling. This is Histone H2B.1/H2B.2 from Tigriopus californicus (Marine copepod).